We begin with the raw amino-acid sequence, 132 residues long: Small ribosomal subunit protein uS8 (132 aa).

It belongs to the universal ribosomal protein uS8 family. Part of the 30S ribosomal subunit. Contacts proteins S5 and S12.

In terms of biological role, one of the primary rRNA binding proteins, it binds directly to 16S rRNA central domain where it helps coordinate assembly of the platform of the 30S subunit. The sequence is that of Small ribosomal subunit protein uS8 from Rhodopseudomonas palustris (strain BisB18).